A 725-amino-acid chain; its full sequence is MWSSVANLKENLNKIAHDVHDDDEDDDEDLTIYGSTNGGTDRRNSNGFRYSRSPMANGFESPVNPEIERYKAEINKLQKSESEIKALSVNYAALLKEKEDQISRLNQENGSLKQNLTSTNAALKESRLDLSRASNNNAIKGNGDHSPNRSQRSPTNWKNRNQMNNGIASKPNGTENDSESHKKEKEFAEMLEERTRSMASAQARELEKEREKSANLQILLQEERKQNETFKEELQSLRLDKEKTLMESNKVRRELDAKLAEIRQLQMKLNGGEQHAFGISRENLKEVNKALEKENNELKLKRSELEAALEASQKSTSRKLFPKSTEDLSRHLSSLDEEKAGTFPGKEDMEKSLQRLEKELEEARREKDKARQELKRLKQHLLEKETEESEKMDEDSRLIDELRQTNEYQRSQILGLEKALRQTMANQEEIKSSSDLEIRKSKGIIEDLNQKLANCLRTIDSKNVELLNLQTALGQYYAEIEAKEHFERELAVAKEDAMKLSARLKDVDEQLESSKKEKEEITSKVLHAENIAAEWKNRVSKVEDDNAKVRRVLEQSMTRLNRMSMDSDFLVDRRIVIKLLVTYFQRNHSREVLDLMVRMLGFSEEEKQRIGLAQQGAAGKGVVRGVLGFPGRLVGGILGGGGGSPDSHPNMASDNQSFADMWVEFLLKDAEERERREAEDAANKEQEKATVSSTQRPKYEQSDSEFSTVPLTSSNSNHRLSRLLT.

A disordered region spans residues 17–62 (HDVHDDDEDDDEDLTIYGSTNGGTDRRNSNGFRYSRSPMANGFESP). The segment covering 21–30 (DDDEDDDEDL) has biased composition (acidic residues). Residues 66–132 (EIERYKAEIN…LKESRLDLSR (67 aa)) adopt a coiled-coil conformation. Disordered stretches follow at residues 134–183 (SNNN…SHKK), 191–210 (LEER…EKER), and 311–349 (ASQK…KEDM). Residues 148–175 (NRSQRSPTNWKNRNQMNNGIASKPNGTE) show a composition bias toward polar residues. Coiled coils occupy residues 191–316 (LEER…QKST), 344–407 (PGKE…QTNE), and 437–563 (EIRK…LNRM). The span at 324–349 (STEDLSRHLSSLDEEKAGTFPGKEDM) shows a compositional bias: basic and acidic residues. The region spanning 562 to 613 (RMSMDSDFLVDRRIVIKLLVTYFQRNHSREVLDLMVRMLGFSEEEKQRIGLA) is the GRIP domain. Positions 672–688 (ERERREAEDAANKEQEK) are enriched in basic and acidic residues. Residues 672–725 (ERERREAEDAANKEQEKATVSSTQRPKYEQSDSEFSTVPLTSSNSNHRLSRLLT) are disordered. Low complexity predominate over residues 711–725 (LTSSNSNHRLSRLLT).

It localises to the golgi apparatus. Its function is as follows. Golgi matrix protein playing a role in tethering of vesicles to Golgi membranes and in maintaining the overall structure of the Golgi apparatus. The protein is Golgin candidate 4 (GC4) of Arabidopsis thaliana (Mouse-ear cress).